A 162-amino-acid polypeptide reads, in one-letter code: Ecotin (162 aa).

The signal sequence occupies residues 1 to 18 (MKMFVPAVVFAASASAWA). C70 and C107 are disulfide-bonded.

This sequence belongs to the protease inhibitor I11 (ecotin) family. In terms of assembly, homodimer.

It localises to the periplasm. General inhibitor of pancreatic serine proteases: inhibits chymotrypsin, trypsin, elastases, factor X, kallikrein as well as a variety of other proteases. This is Ecotin from Salmonella arizonae (strain ATCC BAA-731 / CDC346-86 / RSK2980).